The chain runs to 286 residues: Zinc finger protein ZAT5 (286 aa).

3 disordered regions span residues 1-28, 40-60, and 131-171; these read MMMG…RSSS, STSS…EYNS, and GGHR…FKVS. A C2H2-type 1 zinc finger spans residues 115 to 137; sequence YECKTCNRTFSSFQALGGHRASH. Positions 154–171 are enriched in polar residues; it reads QPKSSASEEGQNSHFKVS. A C2H2-type 2 zinc finger spans residues 190–212; that stretch reads HECSICGSEFTSGQALGGHMRRH.

Expressed in flowers and siliques.

It localises to the nucleus. Its function is as follows. Probable transcription factor that may be involved in stress responses. This is Zinc finger protein ZAT5 (ZAT5) from Arabidopsis thaliana (Mouse-ear cress).